We begin with the raw amino-acid sequence, 277 residues long: Hydroxypyruvate/pyruvate aldolase (277 aa).

Histidine 54 acts as the Proton acceptor in catalysis. A divalent metal cation contacts are provided by glutamate 158 and aspartate 184.

Belongs to the HpcH/HpaI aldolase family. Requires a divalent metal cation as cofactor.

The catalysed reaction is D-glyceraldehyde + 3-hydroxypyruvate = (3R,4S,5R)-3,4,5,6-tetrahydroxy-2-oxohexanoate. The enzyme catalyses D-glyceraldehyde + 3-hydroxypyruvate = 2-dehydro-D-gluconate. It catalyses the reaction D-glyceraldehyde + 3-hydroxypyruvate = 2-dehydro-D-galactonate. It carries out the reaction D-glyceraldehyde + pyruvate = 2-dehydro-3-deoxy-L-galactonate. Functionally, aldolase which can catalyze in vitro the aldolisation reaction between hydroxypyruvate (HPA) or pyruvate (PA) and D-glyceraldehyde (D-GA). The condensation of hydroxypyruvate and D-glyceraldehyde produces (3R,4S,5R)-3,4,5,6-tetrahydroxy-2-oxohexanoate as the major product, 2-dehydro-D-gluconate and 2-dehydro-D-galactonate. The condensation of pyruvate and D-glyceraldehyde produces 2-dehydro-3-deoxy-L-galactonate as the major product. The polypeptide is Hydroxypyruvate/pyruvate aldolase (Deinococcus radiodurans (strain ATCC 13939 / DSM 20539 / JCM 16871 / CCUG 27074 / LMG 4051 / NBRC 15346 / NCIMB 9279 / VKM B-1422 / R1)).